We begin with the raw amino-acid sequence, 274 residues long: tRNA pseudouridine synthase A (274 aa).

Asp-51 (nucleophile) is an active-site residue. Tyr-109 contacts substrate.

The protein belongs to the tRNA pseudouridine synthase TruA family. Homodimer.

It carries out the reaction uridine(38/39/40) in tRNA = pseudouridine(38/39/40) in tRNA. Functionally, formation of pseudouridine at positions 38, 39 and 40 in the anticodon stem and loop of transfer RNAs. The chain is tRNA pseudouridine synthase A from Acidovorax sp. (strain JS42).